The following is a 163-amino-acid chain: Phosphopantetheine adenylyltransferase (163 aa).

Ser11 lines the substrate pocket. Residues 11–12 and His19 contribute to the ATP site; that span reads SF. Residues Lys43, Leu75, and Arg89 each contribute to the substrate site. ATP-binding positions include 90–92, Glu100, and 125–131; these read GLR and FGYLSSS.

It belongs to the bacterial CoaD family. As to quaternary structure, homohexamer. It depends on Mg(2+) as a cofactor.

It localises to the cytoplasm. The enzyme catalyses (R)-4'-phosphopantetheine + ATP + H(+) = 3'-dephospho-CoA + diphosphate. The protein operates within cofactor biosynthesis; coenzyme A biosynthesis; CoA from (R)-pantothenate: step 4/5. In terms of biological role, reversibly transfers an adenylyl group from ATP to 4'-phosphopantetheine, yielding dephospho-CoA (dPCoA) and pyrophosphate. This Geobacter metallireducens (strain ATCC 53774 / DSM 7210 / GS-15) protein is Phosphopantetheine adenylyltransferase.